Reading from the N-terminus, the 368-residue chain is tRNA(Met) cytidine acetate ligase (368 aa).

ATP is bound by residues 7–20 (IAEF…HKYL), G96, N152, and R175.

The protein belongs to the TmcAL family.

The protein localises to the cytoplasm. It carries out the reaction cytidine(34) in elongator tRNA(Met) + acetate + ATP = N(4)-acetylcytidine(34) in elongator tRNA(Met) + AMP + diphosphate. Functionally, catalyzes the formation of N(4)-acetylcytidine (ac(4)C) at the wobble position of elongator tRNA(Met), using acetate and ATP as substrates. First activates an acetate ion to form acetyladenylate (Ac-AMP) and then transfers the acetyl group to tRNA to form ac(4)C34. This Streptococcus pyogenes serotype M4 (strain MGAS10750) protein is tRNA(Met) cytidine acetate ligase.